Here is a 165-residue protein sequence, read N- to C-terminus: Urease accessory protein UreE (165 aa).

The protein belongs to the UreE family.

The protein resides in the cytoplasm. Involved in urease metallocenter assembly. Binds nickel. Probably functions as a nickel donor during metallocenter assembly. The chain is Urease accessory protein UreE from Flavobacterium johnsoniae (strain ATCC 17061 / DSM 2064 / JCM 8514 / BCRC 14874 / CCUG 350202 / NBRC 14942 / NCIMB 11054 / UW101) (Cytophaga johnsonae).